A 179-amino-acid chain; its full sequence is Protein GrpE (179 aa).

The interval 1-22 (MTDNNIENNEEEIRKAPSANDR) is disordered. Residues 11–22 (EEIRKAPSANDR) are compositionally biased toward basic and acidic residues.

This sequence belongs to the GrpE family. As to quaternary structure, homodimer.

Its subcellular location is the cytoplasm. In terms of biological role, participates actively in the response to hyperosmotic and heat shock by preventing the aggregation of stress-denatured proteins, in association with DnaK and GrpE. It is the nucleotide exchange factor for DnaK and may function as a thermosensor. Unfolded proteins bind initially to DnaJ; upon interaction with the DnaJ-bound protein, DnaK hydrolyzes its bound ATP, resulting in the formation of a stable complex. GrpE releases ADP from DnaK; ATP binding to DnaK triggers the release of the substrate protein, thus completing the reaction cycle. Several rounds of ATP-dependent interactions between DnaJ, DnaK and GrpE are required for fully efficient folding. This chain is Protein GrpE, found in Rickettsia canadensis (strain McKiel).